The primary structure comprises 725 residues: Glutamine-dependent NAD(+) synthetase (725 aa).

Residues 4–274 (LKVATCNLNQ…VEVIISQVDL (271 aa)) enclose the CN hydrolase domain. Residue Glu-44 is the Proton acceptor; for glutaminase activity of the active site. The For glutaminase activity role is filled by Lys-113. Cys-174 (nucleophile; for glutaminase activity) is an active-site residue. Residues 324-709 (YHSPQEEIAF…FPEEEANSNK (386 aa)) form a ligase region. Position 354-361 (354-361 (PLSGGADS)) interacts with ATP. Ser-356 is a catalytic residue.

In the C-terminal section; belongs to the NAD synthetase family.

It carries out the reaction deamido-NAD(+) + L-glutamine + ATP + H2O = L-glutamate + AMP + diphosphate + NAD(+) + H(+). The protein operates within cofactor biosynthesis; NAD(+) biosynthesis; NAD(+) from deamido-NAD(+) (L-Gln route): step 1/1. The chain is Glutamine-dependent NAD(+) synthetase from Arabidopsis thaliana (Mouse-ear cress).